Here is a 926-residue protein sequence, read N- to C-terminus: BTB/POZ domain-containing protein KCTD19 (926 aa).

The BTB 1 domain maps to 18–72 (NVGGWHFSVPRSKLSQFPDSLLWKEASALTSSESQRLFIDRDGSTFRHVHYYLYT). Ser270 is modified (phosphoserine). The BTB 2 domain occupies 398 to 485 (IKVYVGSHWY…YHIPSLSEAL (88 aa)). Positions 673–751 (GSEAASQPST…PAPEQPLPEA (79 aa)) are disordered. The segment covering 730 to 742 (DWSKQRTKERESP) has biased composition (basic and acidic residues).

Identified in a complex with ZNF541, HDAC1 and HSPA2. Identified in a complex with ZNF541 and HDAC1. Identified in a complex with HDAC1, HDAC2, DNTTIP1 and ZNF541.

Its subcellular location is the nucleus. Its function is as follows. Transcription regulator which is essential for male fertility and for the completion of meiotic prophase in spermatocytes. Regulates progression of the pachytene stage of meiotic prophase and promotes the transcriptional activation activity ZNF541. Required for the organization of chromosomes during metaphase I. This is BTB/POZ domain-containing protein KCTD19 (KCTD19) from Homo sapiens (Human).